Reading from the N-terminus, the 248-residue chain is Killer cell lectin-like receptor subfamily I member 2 (248 aa).

Topologically, residues M1–Q79 are cytoplasmic. Positions I19–E44 are disordered. Over residues E28 to E44 the composition is skewed to basic and acidic residues. Residues M80–I100 traverse the membrane as a helical; Signal-anchor for type II membrane protein segment. Topologically, residues P101–I248 are extracellular. Disulfide bonds link C132–C145, C161–C244, and C223–C236. The region spanning F139 to E245 is the C-type lectin domain. N-linked (GlcNAc...) asparagine glycosylation is found at N197, N214, and N220.

Heterodimer with KLRE1. As to expression, expressed in natural killer (NK) cells.

It localises to the cell membrane. In terms of biological role, lectin-like receptor for natural killer (NK) cells. Heterodimer formation with KLRE1 mediates NK cell cytolytic activity. This Mus musculus (Mouse) protein is Killer cell lectin-like receptor subfamily I member 2.